The following is a 215-amino-acid chain: N-(5'-phosphoribosyl)anthranilate isomerase (215 aa).

Belongs to the TrpF family.

The catalysed reaction is N-(5-phospho-beta-D-ribosyl)anthranilate = 1-(2-carboxyphenylamino)-1-deoxy-D-ribulose 5-phosphate. Its pathway is amino-acid biosynthesis; L-tryptophan biosynthesis; L-tryptophan from chorismate: step 3/5. The polypeptide is N-(5'-phosphoribosyl)anthranilate isomerase (Paramagnetospirillum magneticum (strain ATCC 700264 / AMB-1) (Magnetospirillum magneticum)).